Reading from the N-terminus, the 2498-residue chain is Nuclear receptor corepressor 1 (2498 aa).

Disordered stretches follow at residues 1 to 38 (MSSS…QQEY), 54 to 84 (IQQQ…SGYD), 134 to 169 (SEVK…SKLS), and 198 to 223 (QQQL…VEQK). 3 stretches are compositionally biased toward basic and acidic residues: residues 71-82 (PVSDRPQDRRSG), 134-148 (SEVK…KHES), and 204-213 (EAAKPPEPEK). Residues 154–304 (SGQPGDDQDA…REQNICQRYD (151 aa)) form an interaction with tbl1xr1-A region. Positions 168–208 (LSKEELIQSMDRVDREIAKVEQQILKLKKKQQQLEEEAAKP) form a coiled coil. In terms of domain architecture, SANT 1 spans 427-478 (QFMNVWTDHEKEIFKEKFVRHPKNFGLIASYLERKNVSDCVLYYYLTKKNEN). Basic residues predominate over residues 483–493 (VRRNYPKRRGR). Disordered regions lie at residues 483-649 (VRRN…GSKS), 668-912 (NLLQ…FGSR), 1075-1122 (SLSD…GTPG), 1417-1436 (DLVS…IMEG), 1470-1583 (SWGV…QRES), 1737-1851 (PGTQ…AQES), and 1916-1990 (PQME…TAHT). Composition is skewed to basic and acidic residues over residues 502-525 (SQEE…KEDE) and 535-548 (KEEL…KIDA). The stretch at 502–552 (SQEEKEIEKVEEEKADRNDKKEDERREEEEKEEKEELREGAKDKIDAVAED) forms a coiled coil. Low complexity predominate over residues 582–611 (ASEAAAANAVTTATTAPVTTTSTATTVAPV). Positions 612 to 627 (PVAPPPEEPTPPPPPQ) are enriched in pro residues. The 38-residue stretch at 628 to 665 (EQSLVDHGRNWGAIAKMVGSKSESQCKNFYFNYKRRHN) folds into the SANT 2 domain. Polar residues predominate over residues 689-699 (QCDSIASTVSA). Positions 700–719 (QEDDENEASNEEENPEDSEG) are enriched in acidic residues. Composition is skewed to low complexity over residues 727-738 (ESAPSPSPAEAA) and 761-774 (DAAS…SPSP). The segment covering 854–863 (MERLMDRAEA) has biased composition (basic and acidic residues). Polar residues-rich tracts occupy residues 872-891 (QNIS…SATC) and 1102-1122 (ATSS…GTPG). Residues 1484 to 1501 (KMGERSKHEDTKSSDAIR) show a composition bias toward basic and acidic residues. A compositionally biased stretch (polar residues) spans 1505–1516 (TSVVSSGPSVLR). A compositionally biased stretch (low complexity) spans 1545–1558 (PSPMSRSSPMARSA). Positions 1765–1804 (VSAERERERERERERDREREKEQRERESDRERERDRLAHA) form a coiled coil. Residues 1767-1802 (AERERERERERERDREREKEQRERESDRERERDRLA) show a composition bias toward basic and acidic residues. Low complexity-rich tracts occupy residues 1803 to 1813 (HAAAAAAAASA) and 1820 to 1835 (RPVS…RPSS). The span at 1842-1851 (PSPSVRAQES) shows a compositional bias: polar residues. A compositionally biased stretch (basic and acidic residues) spans 1921–1942 (AKPKESKNDSARSEENLSRRNA). A compositionally biased stretch (low complexity) spans 1958-1980 (SPYTSSSFSSSKSQSQPSSAVYS). Positions 2012 to 2016 (IDVII) match the CORNR box 1 motif. A disordered region spans residues 2022–2109 (SDKDGRERNS…SPPQQTIPGH (88 aa)). The span at 2031 to 2040 (SQSSDASSSH) shows a compositional bias: low complexity. Residues 2043 to 2052 (HRYEAPRETI) show a composition bias toward basic and acidic residues. Over residues 2093–2106 (RYRQQQESPPQQTI) the composition is skewed to polar residues. Residues 2123–2127 (ICHII) carry the CORNR box 2 motif. A compositionally biased stretch (low complexity) spans 2136-2145 (PVNQPLQQPP). Residues 2136-2222 (PVNQPLQQPP…PISPPQAPML (87 aa)) are disordered. Over residues 2146–2175 (ASTFQSTNPTSTAVRTKASSRFSPESQVQP) the composition is skewed to polar residues. Residues 2190 to 2209 (IPDKPRGRPGKSPDRGHISE) are compositionally biased toward basic and acidic residues. Residues 2326 to 2330 (LEDII) carry the CORNR box 3 motif. Disordered stretches follow at residues 2344–2446 (DHGV…YNPL) and 2464–2498 (TSMT…DSDE). The segment covering 2353-2362 (QGNQSGTPNS) has biased composition (polar residues). Residues 2380 to 2394 (HKQKLISKYGSRKTK) are compositionally biased toward basic residues. Polar residues-rich tracts occupy residues 2464-2476 (TSMT…QQSR) and 2489-2498 (QYETLSDSDE).

It belongs to the N-CoR nuclear receptor corepressors family. In terms of assembly, forms a large corepressor complex that contains sin3a/b, histone deacetylases hdac1 and hdac2, rbbp4 and possibly rbbp7. Interacts with the thyroid receptor (TR, composed of rxra and thrb) and the retinoid acid receptor (RAR, composed of rxra and rara) in the absence of ligand. Interacts with tbl1xr1-A and possibly tbl1xr1-B. Interacts with zbtb33/kaiso.

It is found in the nucleus. Functionally, mediates transcriptional repression by certain nuclear receptors. Participates in complexes which promote histone deacetylation and the formation of repressive chromatin structures which may impede access by the basal transcription machinery. In association with hdac3, may play a role in the regulation of the circadian clock. In Xenopus laevis (African clawed frog), this protein is Nuclear receptor corepressor 1 (ncor1).